A 342-amino-acid polypeptide reads, in one-letter code: Inositol-tetrakisphosphate 1-kinase 1 (342 aa).

1D-myo-inositol 6-phosphate-binding residues include Lys28 and Lys70. Arg105 and Lys155 together coordinate ATP. Positions 116–332 (DHAADQDSTF…HKDGVGNQQE (217 aa)) constitute an ATP-grasp domain. 1D-myo-inositol 6-phosphate contacts are provided by Gly161 and His166. Positions 166, 187, and 190 each coordinate ATP. Lys198 and Tyr200 together coordinate 1D-myo-inositol 6-phosphate. Ser213 contributes to the ATP binding site. Positions 219-247 (PEDDASAQGSVSFSQVSNLPTERTAEEYY) are catalytic specificity elements (CSE). Asn280 is a binding site for 1D-myo-inositol 6-phosphate. A Mg(2+)-binding site is contributed by Asp282. ATP-binding residues include Ile296, Asp297, and Asn299. Mg(2+) is bound by residues Asp297 and Asn299. Positions 299, 303, and 306 each coordinate 1D-myo-inositol 6-phosphate.

It belongs to the ITPK1 family. Monomer. Requires Mg(2+) as cofactor. As to expression, expressed in the embryo of 15 day after pollination. Expressed in kernels at earlier stages but at very low levels. Expression in the embryo peaks at 15 days after pollination and then declines. No expression is detected from endosperm and vegetative tissues.

The enzyme catalyses 1D-myo-inositol 3,4,5,6-tetrakisphosphate + ATP = 1D-myo-inositol 1,3,4,5,6-pentakisphosphate + ADP + H(+). It catalyses the reaction 1D-myo-inositol 1,3,4-trisphosphate + ATP = 1D-myo-inositol 1,3,4,5-tetrakisphosphate + ADP + H(+). The catalysed reaction is 1D-myo-inositol 1,3,4-trisphosphate + ATP = 1D-myo-inositol 1,3,4,6-tetrakisphosphate + ADP + H(+). It carries out the reaction 1D-myo-inositol 1,2,3,4,5-pentakisphosphate + ATP = 3-diphospho-1D-myo-inositol 1,2,4,5-tetrakisphosphate + ADP. The enzyme catalyses 1D-myo-inositol hexakisphosphate + ATP = 5-diphospho-1D-myo-inositol 1,2,3,4,6-pentakisphosphate + ADP. Functionally, kinase that can phosphorylate various inositol polyphosphate such as Ins(3,4,5,6)P4 or Ins(1,3,4)P3 and participates in phytic acid biosynthesis in developing seeds. Phosphorylates Ins(3,4,5,6)P4 at position 1 to form Ins(1,3,4,5,6)P5. This reaction is thought to have regulatory importance, since Ins(3,4,5,6)P4 is an inhibitor of plasma membrane Ca(2+)-activated Cl(-) channels, while Ins(1,3,4,5,6)P5 is not. Also phosphorylates Ins(1,3,4)P3 on O-5 and O-6 to form Ins(1,3,4,6)P4, an essential molecule in the hexakisphosphate (InsP6) pathway. Also able to phosphorylate Ins(3,5,6)P3 but not Ins(1,4,5)P3, Ins(2,4,5)P3, Ins(1,3,4,6)P4 nor Ins(1,3,5,6)P4. Has higher specific activity on Ins(3,4,5,6)P4 than Ins(1,3,4)P3 and Ins(3,5,6)P3. Can also could use Ins(1,2,5,6)P4 as a substrate. Able to add a beta-phosphate to the 3 positions of Ins(1,2,3,4,5)P5 and to add beta-phosphate to InsP6 to yield 5-InsP7, thus exhibiting InsP6 kinase activity. Also has Ins(1,3,4,5,6)P5 phosphatase activity. The sequence is that of Inositol-tetrakisphosphate 1-kinase 1 from Zea mays (Maize).